We begin with the raw amino-acid sequence, 181 residues long: Mating-type protein A1 (181 aa).

Positions aspartate 122 to alanine 181 form a DNA-binding region, homeobox.

This sequence belongs to the MATA1 family.

The protein localises to the nucleus. Mating type proteins are sequence specific DNA-binding proteins that act as master switches in yeast differentiation by controlling gene expression in a cell type-specific fashion. This is Mating-type protein A1 (MATA1) from Pichia angusta (Yeast).